Here is a 207-residue protein sequence, read N- to C-terminus: Outer-membrane lipoprotein LolB (207 aa).

Residues 1–26 form the signal peptide; it reads MSKLKIDTKRRFSLLIALVLIISLSS. Cysteine 27 is lipidated: N-palmitoyl cysteine. Residue cysteine 27 is the site of S-diacylglycerol cysteine attachment.

It belongs to the LolB family. Monomer.

The protein localises to the cell outer membrane. Functionally, plays a critical role in the incorporation of lipoproteins in the outer membrane after they are released by the LolA protein. The polypeptide is Outer-membrane lipoprotein LolB (Francisella tularensis subsp. tularensis (strain FSC 198)).